The chain runs to 135 residues: Snaclec echicetin subunit alpha (135 aa).

The signal sequence occupies residues 1-4; that stretch reads GADE. Disulfide bonds link Cys-6–Cys-17, Cys-34–Cys-129, and Cys-104–Cys-121. In terms of domain architecture, C-type lectin spans 13 to 130; sequence NGVYCYMLFK…CENTFPFMCK (118 aa).

This sequence belongs to the snaclec family. As to quaternary structure, heterodimer of subunits alpha and beta; disulfide-linked. Expressed by the venom gland.

The protein resides in the secreted. Binding of echicetin to GPIbalpha (GP1BA) receptor on platelets alone results in inhibition of platelet aggregation, while binding to both GP1BA receptor and IgMk promotes platelet aggregation and signal transduction. The sequence is that of Snaclec echicetin subunit alpha from Echis carinatus (Saw-scaled viper).